A 343-amino-acid chain; its full sequence is N-acetyl-gamma-glutamyl-phosphate reductase (343 aa).

The active site involves C147.

It belongs to the NAGSA dehydrogenase family. Type 1 subfamily.

Its subcellular location is the cytoplasm. The enzyme catalyses N-acetyl-L-glutamate 5-semialdehyde + phosphate + NADP(+) = N-acetyl-L-glutamyl 5-phosphate + NADPH + H(+). It functions in the pathway amino-acid biosynthesis; L-arginine biosynthesis; N(2)-acetyl-L-ornithine from L-glutamate: step 3/4. In terms of biological role, catalyzes the NADPH-dependent reduction of N-acetyl-5-glutamyl phosphate to yield N-acetyl-L-glutamate 5-semialdehyde. The polypeptide is N-acetyl-gamma-glutamyl-phosphate reductase (Staphylococcus aureus (strain MRSA252)).